Reading from the N-terminus, the 112-residue chain is Integration host factor subunit alpha (112 aa).

The protein belongs to the bacterial histone-like protein family. As to quaternary structure, heterodimer of an alpha and a beta chain.

This protein is one of the two subunits of integration host factor, a specific DNA-binding protein that functions in genetic recombination as well as in transcriptional and translational control. The polypeptide is Integration host factor subunit alpha (Rhizobium etli (strain ATCC 51251 / DSM 11541 / JCM 21823 / NBRC 15573 / CFN 42)).